A 193-amino-acid chain; its full sequence is ATP-dependent Clp protease proteolytic subunit 1 (193 aa).

The active-site Nucleophile is the Ser98. His123 is an active-site residue.

The protein belongs to the peptidase S14 family. Fourteen ClpP subunits assemble into 2 heptameric rings which stack back to back to give a disk-like structure with a central cavity, resembling the structure of eukaryotic proteasomes.

It localises to the cytoplasm. It carries out the reaction Hydrolysis of proteins to small peptides in the presence of ATP and magnesium. alpha-casein is the usual test substrate. In the absence of ATP, only oligopeptides shorter than five residues are hydrolyzed (such as succinyl-Leu-Tyr-|-NHMec, and Leu-Tyr-Leu-|-Tyr-Trp, in which cleavage of the -Tyr-|-Leu- and -Tyr-|-Trp bonds also occurs).. Cleaves peptides in various proteins in a process that requires ATP hydrolysis. Has a chymotrypsin-like activity. Plays a major role in the degradation of misfolded proteins. The sequence is that of ATP-dependent Clp protease proteolytic subunit 1 from Bacillus cereus (strain ZK / E33L).